The following is a 188-amino-acid chain: Elongation factor P (188 aa).

Lysine 34 carries the post-translational modification N6-(3,6-diaminohexanoyl)-5-hydroxylysine.

It belongs to the elongation factor P family. May be beta-lysylated on the epsilon-amino group of Lys-34 by the combined action of EpmA and EpmB, and then hydroxylated on the C5 position of the same residue by EpmC (if this protein is present). Lysylation is critical for the stimulatory effect of EF-P on peptide-bond formation. The lysylation moiety may extend toward the peptidyltransferase center and stabilize the terminal 3-CCA end of the tRNA. Hydroxylation of the C5 position on Lys-34 may allow additional potential stabilizing hydrogen-bond interactions with the P-tRNA.

It localises to the cytoplasm. Its pathway is protein biosynthesis; polypeptide chain elongation. Its function is as follows. Involved in peptide bond synthesis. Alleviates ribosome stalling that occurs when 3 or more consecutive Pro residues or the sequence PPG is present in a protein, possibly by augmenting the peptidyl transferase activity of the ribosome. Modification of Lys-34 is required for alleviation. The protein is Elongation factor P of Coxiella burnetii (strain CbuG_Q212) (Coxiella burnetii (strain Q212)).